A 184-amino-acid chain; its full sequence is Probable sensory rhodopsin transducer (184 aa).

The next 2 helical transmembrane spans lie at 14–34 (TLGVGAVLVLVLATLAVVNVY) and 52–72 (GLVSILLIVAVALLFVATIIG). The region spanning 73 to 125 (RERTAAVETLAAQARQIEQGELDVDLATNRTDDVGDIYRALAVLRDSEQLDRQ) is the HAMP domain.

This sequence belongs to the methyl-accepting chemotaxis (MCP) protein family. As to quaternary structure, interacts with Xop2/SRM.

It is found in the membrane. Functionally, the HtrM-Xop2/SRM complex may interact with CheB or CheR and modulate their availability to Sop1 or Sop2. The chain is Probable sensory rhodopsin transducer (htrM) from Haloarcula marismortui (strain ATCC 43049 / DSM 3752 / JCM 8966 / VKM B-1809) (Halobacterium marismortui).